Consider the following 321-residue polypeptide: Arabinan endo-1,5-alpha-L-arabinosidase A (321 aa).

The N-terminal stretch at 1 to 19 (MYSLLTALSVPLLAGLAHG) is a signal peptide. D34 serves as the catalytic Proton acceptor. A glycan (N-linked (GlcNAc...) asparagine) is linked at N192. E200 serves as the catalytic Proton donor.

The protein belongs to the glycosyl hydrolase 43 family.

Its subcellular location is the secreted. It catalyses the reaction Endohydrolysis of (1-&gt;5)-alpha-arabinofuranosidic linkages in (1-&gt;5)-arabinans.. It functions in the pathway glycan metabolism; L-arabinan degradation. Functionally, endo-1,5-alpha-L-arabinanase involved in degradation of pectin. Its preferred substrate is linear 1,5-alpha-L-arabinan. The polypeptide is Arabinan endo-1,5-alpha-L-arabinosidase A (abnA) (Aspergillus aculeatus).